Reading from the N-terminus, the 74-residue chain is MQKATVLLLALLLLLPLSTAQDAEGSQEDAAQREVDIATRCGGTGDSCNEPAGELCCRRLKCVNSRCCPTTDGC.

The N-terminal stretch at 1–20 is a signal peptide; that stretch reads MQKATVLLLALLLLLPLSTA. Residues 21–40 constitute a propeptide that is removed on maturation; that stretch reads QDAEGSQEDAAQREVDIATR. P51 is subject to 4-hydroxyproline.

In terms of processing, contains disulfide bonds. In terms of tissue distribution, expressed by the venom gland.

The protein localises to the secreted. The polypeptide is Conotoxin ca17a (Conus caracteristicus (Characteristic cone)).